A 117-amino-acid chain; its full sequence is Mediator of RNA polymerase II transcription subunit 11 (117 aa).

A2 is modified (N-acetylalanine).

Belongs to the Mediator complex subunit 11 family. In terms of assembly, component of the Mediator complex, which is composed of MED1, MED4, MED6, MED7, MED8, MED9, MED10, MED11, MED12, MED13, MED13L, MED14, MED15, MED16, MED17, MED18, MED19, MED20, MED21, MED22, MED23, MED24, MED25, MED26, MED27, MED29, MED30, MED31, CCNC, CDK8 and CDC2L6/CDK11. The MED12, MED13, CCNC and CDK8 subunits form a distinct module termed the CDK8 module. Mediator containing the CDK8 module is less active than Mediator lacking this module in supporting transcriptional activation. Individual preparations of the Mediator complex lacking one or more distinct subunits have been variously termed ARC, CRSP, DRIP, PC2, SMCC and TRAP.

It localises to the nucleus. In terms of biological role, component of the Mediator complex, a coactivator involved in the regulated transcription of nearly all RNA polymerase II-dependent genes. Mediator functions as a bridge to convey information from gene-specific regulatory proteins to the basal RNA polymerase II transcription machinery. Mediator is recruited to promoters by direct interactions with regulatory proteins and serves as a scaffold for the assembly of a functional pre-initiation complex with RNA polymerase II and the general transcription factors. The chain is Mediator of RNA polymerase II transcription subunit 11 (MED11) from Bos taurus (Bovine).